Here is a 492-residue protein sequence, read N- to C-terminus: MRKTVVAFAAAIAACSAVLSSTTTSAAPPATPITTLQADGTHLVDGYGRTVLLHGVNNVDKDAPYLPAGETLTPQDIDILVRHGFNTVRLGTSFDALMPQRGQIDEAYLDRLTGVVDALTARGMHVLLDNHQDGLSKAWGGNGFPEWAIESRPREWEPNPGFPLYYLMPSLNAGWDEVWGNTHGALDHLGTALGALAERVEGKPGVMGIELLNEPWPGSRFLSCFPNGCPDFDRTYQAAMQKLTDAVRAQNPTIPVYWEPNVTWNQMMPSNLFAPPVTPALTTADVVFAPHDYCIPSQLAIYLGLPQALRGLCVPQQDLTWSNIDAITERANVPTVITEFGDGDPTVLKNTLARADERFIGWQYWHFGAGNATDPFLGEVGRQLVRTYPQATAGEPGRMIFDADNGDFAYRFTPRAATRPTEIFVSDLHYPDGYAVQVDGGQVTSAPGARIVTVVADGSGPVTVKINRPGSAGAEVPDGPIETSSSGSSGSS.

An N-terminal signal peptide occupies residues 1 to 14 (MRKTVVAFAAAIAA). C15 carries the N-palmitoyl cysteine lipid modification. The S-diacylglycerol cysteine moiety is linked to residue C15. Substrate contacts are provided by residues K61, D62, 131 to 133 (HQD), and 213 to 214 (NE). The Proton donor role is filled by E214. A disulfide bond links C224 and C229. 3 residues coordinate substrate: N265, Q298, and Y302. C294 and C313 are disulfide-bonded. E339 (nucleophile) is an active-site residue. W365 provides a ligand contact to substrate. Residues 467-492 (NRPGSAGAEVPDGPIETSSSGSSGSS) form a disordered region.

It belongs to the glycosyl hydrolase 5 (cellulase A) family.

It localises to the secreted. The protein localises to the membrane. The enzyme catalyses an oligoglycosyl-(1-&gt;4)-beta-D-glucosyl-(1&lt;-&gt;1)-ceramide + H2O = an oligoglycosyl-(1-&gt;4)-D-glucose + an N-acyl-sphingoid base. It catalyses the reaction a ganglioside GM3 + H2O = N-acetyl-alpha-neuraminosyl-(2-&gt;3)-beta-D-galactosyl-(1-&gt;4)-D-glucose + an N-acyl-sphingoid base. It carries out the reaction a ganglioside GM1 + H2O = beta-D-Gal-(1-&gt;3)-beta-D-GalNAc-(1-&gt;4)-[alpha-Neu5Ac-(2-&gt;3)]-beta-D-Gal-(1-&gt;4)-D-Glc + an N-acyl-sphingoid base. The catalysed reaction is a ganglioside Fuc-GM1 + H2O = alpha-Fuc-(1-&gt;2)-beta-Gal-(1-&gt;3)-beta-GalNAc-(1-&gt;4)-[alpha-Neu5Ac-(2-&gt;3)]-beta-Gal-(1-&gt;4)-Glc + an N-acyl-sphingoid base. The enzyme catalyses a beta-D-galactosyl-(1-&gt;4)-beta-D-glucosyl-(1&lt;-&gt;1)-ceramide + H2O = lactose + an N-acyl-sphingoid base. In terms of biological role, hydrolyzes glycosphingolipids; exhibits broad substrate specificity including monosialodihexosylganglioside (GM3), monosialotetrahexosylganglioside (GM1), fucosyl-GM1, lactosylceramide, globotriosylceramide, globotetraosylceramide, ganglioside GD1a, and ganglioside GD1b. No activity towards glucosylceramide and galactosylceramide. This Rhodococcus hoagii (strain 103S) (Rhodococcus equi) protein is Endoglycoceramidase I.